We begin with the raw amino-acid sequence, 67 residues long: Cold shock-like protein CspE (67 aa).

The CSD domain occupies 5–64 (GKVKWFNSEKGFGFIEVEGGNDVFVHFSAITGDGFKSLDEGQEVSFEVEDGNRGPQAKNV).

In terms of assembly, homodimer.

It localises to the cytoplasm. Functionally, can bind to ATTGG and CCAAT motifs (Y-box motifs) of single-stranded oligonucleotides. The sequence is that of Cold shock-like protein CspE (cspE) from Bacillus anthracis.